The sequence spans 839 residues: Autophagy-related protein 9A (839 aa).

The segment at Met1–Gly21 is disordered. At Ala2 the chain carries N-acetylalanine. The Cytoplasmic portion of the chain corresponds to Ala2–Cys61. The Tyrosine-based sorting signal signature appears at Tyr8 to Leu11. Phosphoserine is present on residues Ser14, Ser16, and Ser18. The chain crosses the membrane as a helical span at residues Met62 to Val84. The Lumenal segment spans residues Ser85–Glu128. Asn99 carries N-linked (GlcNAc...) asparagine glycosylation. The helical transmembrane segment at Asn129–Ile154 threads the bilayer. At Cys155–Ile290 the chain is on the cytoplasmic side. Residues Leu291–Cys301 lie within the membrane without spanning it. Residues Pro302–Val319 lie on the Cytoplasmic side of the membrane. An intramembrane segment occupies Leu320 to Gly328. The Cytoplasmic portion of the chain corresponds to Ala329–Pro371. The chain crosses the membrane as a helical span at residues Leu372–Tyr397. Residues Asp398 to His406 lie on the Lumenal side of the membrane. The chain crosses the membrane as a helical span at residues Val407–Phe424. At Ile425–Gln470 the chain is on the cytoplasmic side. The stretch at Tyr471 to Leu480 is an intramembrane region. The Cytoplasmic portion of the chain corresponds to Leu481–Pro483. An intramembrane segment occupies Ile484–Phe492. Topologically, residues Cys493 to Val839 are cytoplasmic. Ser656, Ser735, Ser738, Ser741, and Ser828 each carry phosphoserine. Disordered regions lie at residues Ser656–Val688 and Gln719–Val839. Over residues Glu724–Asp736 the composition is skewed to basic and acidic residues. Composition is skewed to acidic residues over residues Glu737 to Gly747 and Val823 to Leu832.

The protein belongs to the ATG9 family. As to quaternary structure, homotrimer; forms a homotrimer with a central pore that forms a path between the two membrane leaflets. Interacts (via cytoplasmic its C-terminus) with ATG2A. Interacts with SUPT20H. Interacts (via the tyrosine-based sorting signal motif) with AP4M1; promoting association with the AP-4 complex. Interacts with ARFIP1 and ARFIP2. Interacts with PI4K2A and PI4KB. Interacts with ATG4A; the interaction is direct and promotes ATG9A trafficking. Post-translationally, ufmylated in a DDRGK1 dependent manner.

The protein resides in the preautophagosomal structure membrane. The protein localises to the cytoplasmic vesicle. It localises to the autophagosome membrane. Its subcellular location is the golgi apparatus. It is found in the trans-Golgi network membrane. The protein resides in the late endosome membrane. The protein localises to the recycling endosome membrane. It localises to the endoplasmic reticulum membrane. Its subcellular location is the mitochondrion membrane. The catalysed reaction is a 1,2-diacyl-sn-glycero-3-phosphocholine(in) = a 1,2-diacyl-sn-glycero-3-phosphocholine(out). It catalyses the reaction a 1,2-diacyl-sn-glycero-3-phospho-L-serine(in) = a 1,2-diacyl-sn-glycero-3-phospho-L-serine(out). It carries out the reaction a 1,2-diacyl-sn-glycero-3-phosphoethanolamine(in) = a 1,2-diacyl-sn-glycero-3-phosphoethanolamine(out). Its function is as follows. Phospholipid scramblase involved in autophagy by mediating autophagosomal membrane expansion. Cycles between the preautophagosomal structure/phagophore assembly site (PAS) and the cytoplasmic vesicle pool and supplies membrane for the growing autophagosome. Lipid scramblase activity plays a key role in preautophagosomal structure/phagophore assembly by distributing the phospholipids that arrive through ATG2 (ATG2A or ATG2B) from the cytoplasmic to the luminal leaflet of the bilayer, thereby driving autophagosomal membrane expansion. Also required to supply phosphatidylinositol 4-phosphate to the autophagosome initiation site by recruiting the phosphatidylinositol 4-kinase beta (PI4KB) in a process dependent on ARFIP2, but not ARFIP1. In addition to autophagy, also plays a role in necrotic cell death. The chain is Autophagy-related protein 9A from Bos taurus (Bovine).